The following is a 167-amino-acid chain: Swarming motility protein SwrB (167 aa).

The tract at residues 63–105 (IENKASSASQSDEESQKSGLQTSETYQERDPVQEAENLPEHIE) is disordered. Over residues 88 to 105 (YQERDPVQEAENLPEHIE) the composition is skewed to basic and acidic residues.

Functionally, required for swarming motility and for maximal sigma-D activity. The protein is Swarming motility protein SwrB (swrB) of Bacillus subtilis (strain 168).